Here is a 375-residue protein sequence, read N- to C-terminus: MNCNYFGICASCTLFDKTYEEQLNYKIQREKERFSNFTNIDFDIIKSNESNFRNRAEFRIWWEKGENNKEILSYAMNDFKKNILKINSCEMVSFHIKELMPKLIDELQNDLELSFKLFAVEFLGSSTKDMLVTLIYHKKLEESWIQKAKEIEKKLNIKIIGRSKKQRLVLTNDYINETLNISNQNFFFAYEENGFTQPNTNVNVQMIEWVLENTKNSSKDLCELYCGGGNFTIPLSTKFRKVLATEISKTSIKSALRNCSLNKIESISFIRMSAEDFVQALNKVRAFNRLKDINLDDYEFDTIFMDPPRSGLDDTTRNLAKDFENIIYISCNPETLHRDLEELTKTHEIEKFALFDQFAFTNHIESGVILRKLKD.

Residues Gln-197, Tyr-225, Asn-230, Glu-246, and Asp-306 each coordinate S-adenosyl-L-methionine. Cys-331 (nucleophile) is an active-site residue. Residue Glu-365 is the Proton acceptor of the active site.

It belongs to the class I-like SAM-binding methyltransferase superfamily. RNA M5U methyltransferase family. TrmA subfamily.

The enzyme catalyses uridine(54) in tRNA + S-adenosyl-L-methionine = 5-methyluridine(54) in tRNA + S-adenosyl-L-homocysteine + H(+). It carries out the reaction uridine(341) in tmRNA + S-adenosyl-L-methionine = 5-methyluridine(341) in tmRNA + S-adenosyl-L-homocysteine + H(+). Its function is as follows. Dual-specificity methyltransferase that catalyzes the formation of 5-methyluridine at position 54 (m5U54) in all tRNAs, and that of position 341 (m5U341) in tmRNA (transfer-mRNA). This chain is tRNA/tmRNA (uracil-C(5))-methyltransferase, found in Aliarcobacter butzleri (strain RM4018) (Arcobacter butzleri).